The chain runs to 276 residues: 4-hydroxy-tetrahydrodipicolinate reductase (276 aa).

16–21 contacts NAD(+); sequence GALGKM. Lysine 44 provides a ligand contact to NADP(+). NAD(+) is bound by residues 109-111 and 135-138; these read GTT and APNF. Histidine 165 acts as the Proton donor/acceptor in catalysis. Residue histidine 166 coordinates (S)-2,3,4,5-tetrahydrodipicolinate. The Proton donor role is filled by lysine 169. Residue 175 to 176 coordinates (S)-2,3,4,5-tetrahydrodipicolinate; sequence GT.

Belongs to the DapB family.

It is found in the cytoplasm. The catalysed reaction is (S)-2,3,4,5-tetrahydrodipicolinate + NAD(+) + H2O = (2S,4S)-4-hydroxy-2,3,4,5-tetrahydrodipicolinate + NADH + H(+). It carries out the reaction (S)-2,3,4,5-tetrahydrodipicolinate + NADP(+) + H2O = (2S,4S)-4-hydroxy-2,3,4,5-tetrahydrodipicolinate + NADPH + H(+). It functions in the pathway amino-acid biosynthesis; L-lysine biosynthesis via DAP pathway; (S)-tetrahydrodipicolinate from L-aspartate: step 4/4. Its function is as follows. Catalyzes the conversion of 4-hydroxy-tetrahydrodipicolinate (HTPA) to tetrahydrodipicolinate. The chain is 4-hydroxy-tetrahydrodipicolinate reductase from Thermosynechococcus vestitus (strain NIES-2133 / IAM M-273 / BP-1).